A 206-amino-acid polypeptide reads, in one-letter code: N-(5'-phosphoribosyl)anthranilate isomerase (206 aa).

It belongs to the TrpF family.

The enzyme catalyses N-(5-phospho-beta-D-ribosyl)anthranilate = 1-(2-carboxyphenylamino)-1-deoxy-D-ribulose 5-phosphate. It participates in amino-acid biosynthesis; L-tryptophan biosynthesis; L-tryptophan from chorismate: step 3/5. The sequence is that of N-(5'-phosphoribosyl)anthranilate isomerase from Rubrobacter xylanophilus (strain DSM 9941 / JCM 11954 / NBRC 16129 / PRD-1).